The chain runs to 545 residues: High-molecular-weight cytochrome c (545 aa).

A signal peptide spans 1-31 (MRNGRTLLRWAGVLAATAIIGVGGFWSQGTT). Heme c is bound by residues H66, H69, C80, C83, H84, H111, C114, C117, H118, C135, C138, H139, H159, H162, C178, C181, H182, H183, C202, C205, H206, H222, C225, C228, H229, C244, C247, H248, H298, H301, C308, C311, H312, H313, C319, C322, H323, H341, C349, C352, H353, C362, C365, H366, C378, C381, H382, H449, H470, C477, C480, H481, H482, C493, C496, H497, H516, C519, C522, H523, C536, C539, and H540.

As to quaternary structure, monomer. Binds 16 heme c groups per subunit. High-spin heme 15 has single axial histidine ligand and the other hemes are low-spin bis-histidinyl coordinated.

Its subcellular location is the periplasm. In terms of biological role, HMWC (high-molecular-weight cytochrome c), ORF2, ORF3, ORF4, ORF5 and ORF6 in the HMC operon form a transmembrane protein complex that allows electron flow from the periplasmic hydrogenase to the cytoplasmic enzymes that catalyze reduction of sulfates. This is High-molecular-weight cytochrome c (hmcA) from Nitratidesulfovibrio vulgaris (strain ATCC 29579 / DSM 644 / CCUG 34227 / NCIMB 8303 / VKM B-1760 / Hildenborough) (Desulfovibrio vulgaris).